Here is a 414-residue protein sequence, read N- to C-terminus: Multifunctional CCA protein (414 aa).

ATP contacts are provided by Gly-8 and Arg-11. Gly-8 and Arg-11 together coordinate CTP. The Mg(2+) site is built by Asp-21 and Asp-23. Residues Arg-91, Arg-143, and Arg-146 each coordinate ATP. Arg-91, Arg-143, and Arg-146 together coordinate CTP. The region spanning 232-333 (TGVHVMMVID…TRLVERCDAL (102 aa)) is the HD domain.

This sequence belongs to the tRNA nucleotidyltransferase/poly(A) polymerase family. Bacterial CCA-adding enzyme type 1 subfamily. In terms of assembly, monomer. Can also form homodimers and oligomers. It depends on Mg(2+) as a cofactor. Ni(2+) serves as cofactor.

It catalyses the reaction a tRNA precursor + 2 CTP + ATP = a tRNA with a 3' CCA end + 3 diphosphate. The enzyme catalyses a tRNA with a 3' CCA end + 2 CTP + ATP = a tRNA with a 3' CCACCA end + 3 diphosphate. Functionally, catalyzes the addition and repair of the essential 3'-terminal CCA sequence in tRNAs without using a nucleic acid template. Adds these three nucleotides in the order of C, C, and A to the tRNA nucleotide-73, using CTP and ATP as substrates and producing inorganic pyrophosphate. tRNA 3'-terminal CCA addition is required both for tRNA processing and repair. Also involved in tRNA surveillance by mediating tandem CCA addition to generate a CCACCA at the 3' terminus of unstable tRNAs. While stable tRNAs receive only 3'-terminal CCA, unstable tRNAs are marked with CCACCA and rapidly degraded. The chain is Multifunctional CCA protein from Cupriavidus metallidurans (strain ATCC 43123 / DSM 2839 / NBRC 102507 / CH34) (Ralstonia metallidurans).